Consider the following 385-residue polypeptide: Glycine/sarcosine/betaine reductase complex component C subunit alpha (385 aa).

Cys359 is a catalytic residue.

Heterooctamer of four alpha and four beta subunits. Component of the glycine, sarcosine and betaine reductase complexes, together with proteins A and B.

It carries out the reaction acetyl phosphate + [thioredoxin]-disulfide + NH4(+) + H2O = [thioredoxin]-dithiol + glycine + phosphate + H(+). The catalysed reaction is acetyl phosphate + methylamine + [thioredoxin]-disulfide + H2O = sarcosine + [thioredoxin]-dithiol + phosphate + H(+). It catalyses the reaction acetyl phosphate + trimethylamine + [thioredoxin]-disulfide + H2O = glycine betaine + [thioredoxin]-dithiol + phosphate + H(+). In the first step of glycine, betaine and sarcosine reductases, the substrate is bound to component PB via a Schiff base intermediate. Then the PB-activated substrate is nucleophilically attacked by the selenol anion of component PA to transform it to a carboxymethylated selenoether and the respective amine. By action of component PC, acetyl phosphate is formed, leaving component PA in its oxidized state. Finally component PA becomes reduced by the thioredoxin system to start a new catalytic cycle of reductive deamination. This chain is Glycine/sarcosine/betaine reductase complex component C subunit alpha (grdD), found in Peptoclostridium acidaminophilum (Eubacterium acidaminophilum).